We begin with the raw amino-acid sequence, 293 residues long: Homoserine kinase (293 aa).

Position 83–93 (83–93 (RPKSGLGSSGA)) interacts with ATP.

It belongs to the GHMP kinase family. Homoserine kinase subfamily.

It is found in the cytoplasm. It carries out the reaction L-homoserine + ATP = O-phospho-L-homoserine + ADP + H(+). It participates in amino-acid biosynthesis; L-threonine biosynthesis; L-threonine from L-aspartate: step 4/5. In terms of biological role, catalyzes the ATP-dependent phosphorylation of L-homoserine to L-homoserine phosphate. The chain is Homoserine kinase from Pyrococcus horikoshii (strain ATCC 700860 / DSM 12428 / JCM 9974 / NBRC 100139 / OT-3).